We begin with the raw amino-acid sequence, 319 residues long: MVHNKVTIIGSGPAAHTAAIYLARAEIKPILYEGMMANGIAAGGQLTTTTEIENFPGFPDGLTGSELMDRMREQSTKFGTEIITETVSKVDLSSKPFKLWTEFNEDAEPVTTDAIILATGASAKRMHLPGEETYWQKGISACAVCDGAVPIFRNKPLAVIGGGDSACEEAQFLTKYGSKVFMLVRKDHLRASTIMQKRAEKNEKIEILYNTVALEAKGDGKLLNALRIKNTKKNEETDLPVSGLFYAIGHTPATKIVAGQVDTDEAGYIKTVPGSSLTSVPGFFAAGDVQDSKYRQAITSAGSGCMAALDAEKYLTSLE.

FAD-binding positions include 11 to 14 (SGPA), 40 to 41 (IA), Q45, N54, V87, C145, D288, and 295 to 297 (RQA). Cysteines 142 and 145 form a disulfide. S303 is modified (phosphoserine).

This sequence belongs to the class-II pyridine nucleotide-disulfide oxidoreductase family. As to quaternary structure, homodimer. FAD is required as a cofactor.

It localises to the cytoplasm. The protein localises to the mitochondrion intermembrane space. The catalysed reaction is [thioredoxin]-dithiol + NADP(+) = [thioredoxin]-disulfide + NADPH + H(+). Central component in the thioredoxin system. Reduces thioredoxins 1 and 2. The protein is Thioredoxin reductase 1 (TRR1) of Saccharomyces cerevisiae (strain ATCC 204508 / S288c) (Baker's yeast).